The following is a 276-amino-acid chain: ATP synthase subunit a (276 aa).

6 helical membrane passes run 27–47 (ITML…LEVG), 61–81 (GQTF…SLAA), 120–140 (LPFI…GALL), 159–179 (DINT…YAGL), 225–245 (LVVA…LMAL), and 246–266 (GLFT…AYIH).

The protein belongs to the ATPase A chain family. As to quaternary structure, F-type ATPases have 2 components, CF(1) - the catalytic core - and CF(0) - the membrane proton channel. CF(1) has five subunits: alpha(3), beta(3), gamma(1), delta(1), epsilon(1). CF(0) has four main subunits: a, b, b' and c.

Its subcellular location is the cellular thylakoid membrane. Its function is as follows. Key component of the proton channel; it plays a direct role in the translocation of protons across the membrane. The protein is ATP synthase subunit a of Synechocystis sp. (strain ATCC 27184 / PCC 6803 / Kazusa).